The primary structure comprises 112 residues: uncharacterized protein (112 aa).

The helical transmembrane segment at 62–82 threads the bilayer; that stretch reads THSFIFFILFLFIFIFLTFSH.

Its subcellular location is the membrane. This is an uncharacterized protein from Saccharomyces cerevisiae (strain ATCC 204508 / S288c) (Baker's yeast).